Consider the following 627-residue polypeptide: Sodium- and chloride-dependent GABA transporter 3 (627 aa).

The tract at residues 1–36 (MTAEQALPLGNGKAAEEARGSEALGGGGGGAAGTRE) is disordered. The Cytoplasmic segment spans residues 1-53 (MTAEQALPLGNGKAAEEARGSEALGGGGGGAAGTREARDKAVHERGHWNNKVE). Position 21 is a phosphoserine (S21). Positions 23 to 32 (ALGGGGGGAA) are enriched in gly residues. 3 helical membrane-spanning segments follow: residues 54 to 74 (FVLS…FPYL), 82 to 101 (AFLI…VFFL), and 126 to 146 (GIGY…IIIL). Residues 147–220 (AWAIFYLSNC…DGIEHIGNLR (74 aa)) lie on the Extracellular side of the membrane. N-linked (GlcNAc...) asparagine glycans are attached at residues N182, N185, and N193. 9 consecutive transmembrane segments (helical) span residues 221–239 (WELA…FCIW), 248–265 (VVYV…ILLI), 301–318 (IFFS…LGSY), 330–351 (IMLC…FSVL), 384–403 (MPLS…FLGL), 433–451 (LLIL…VMLT), 468–488 (GMCL…VYGS), 509–528 (WCWK…FFLV), and 548–566 (IGWL…WIFI). Topologically, residues 567-627 (KLWKTEGTLP…SAITEKETHF (61 aa)) are cytoplasmic.

This sequence belongs to the sodium:neurotransmitter symporter (SNF) (TC 2.A.22) family. SLC6A11 subfamily. As to expression, brain and retina. Expressed predominantly within neurons. Expressed in the hippocampus (at protein level).

It is found in the cell membrane. It catalyses the reaction 4-aminobutanoate(out) + chloride(out) + 2 Na(+)(out) = 4-aminobutanoate(in) + chloride(in) + 2 Na(+)(in). The enzyme catalyses taurine(out) + chloride(out) + 2 Na(+)(out) = taurine(in) + chloride(in) + 2 Na(+)(in). The catalysed reaction is beta-alanine(out) + chloride(out) + 2 Na(+)(out) = beta-alanine(in) + chloride(in) + 2 Na(+)(in). It carries out the reaction hypotaurine(out) + chloride(out) + 2 Na(+)(out) = hypotaurine(in) + chloride(in) + 2 Na(+)(in). With respect to regulation, GABA transport is inhibited by beta-alanine. Mediates sodium- and chloride-dependent transport of gamma-aminobutyric acid (GABA). Can also mediate transport of beta-alanine and to a lower extent that of taurine and hypotaurine. The sequence is that of Sodium- and chloride-dependent GABA transporter 3 (Slc6a11) from Rattus norvegicus (Rat).